Here is a 72-residue protein sequence, read N- to C-terminus: Translation initiation factor IF-1 (72 aa).

The region spanning 1–72 is the S1-like domain; that stretch reads MAKDDVIEVE…TRGRITYRYK (72 aa). Tyr60 carries the phosphotyrosine modification.

The protein belongs to the IF-1 family. In terms of assembly, component of the 30S ribosomal translation pre-initiation complex which assembles on the 30S ribosome in the order IF-2 and IF-3, IF-1 and N-formylmethionyl-tRNA(fMet); mRNA recruitment can occur at any time during PIC assembly.

The protein resides in the cytoplasm. Its function is as follows. One of the essential components for the initiation of protein synthesis. Stabilizes the binding of IF-2 and IF-3 on the 30S subunit to which N-formylmethionyl-tRNA(fMet) subsequently binds. Helps modulate mRNA selection, yielding the 30S pre-initiation complex (PIC). Upon addition of the 50S ribosomal subunit IF-1, IF-2 and IF-3 are released leaving the mature 70S translation initiation complex. In Bacillus pumilus (strain SAFR-032), this protein is Translation initiation factor IF-1.